The chain runs to 106 residues: Small ribosomal subunit protein uS10 (106 aa).

It belongs to the universal ribosomal protein uS10 family. In terms of assembly, part of the 30S ribosomal subunit.

Involved in the binding of tRNA to the ribosomes. The protein is Small ribosomal subunit protein uS10 of Pyrobaculum neutrophilum (strain DSM 2338 / JCM 9278 / NBRC 100436 / V24Sta) (Thermoproteus neutrophilus).